Consider the following 401-residue polypeptide: E3 ubiquitin-protein ligase NHLRC1 (401 aa).

The RING-type zinc-finger motif lies at 28-74; it reads CKVCFERFGHWQQRRPRNLPCGHVVCLACVAALAHPRTLGLECPFCR. NHL repeat units lie at residues 115–159, 163–206, 207–247, 250–303, 304–352, and 353–396; these read TLTC…FDSG, AHQF…FDFF, GQIK…LEAD, EGVL…FNST, MQLI…LGKP, and EEFP…FKVM.

Interacts with AGL. Interacts (via the NHL repeats) with EPM2A/laforin. Forms a complex with EPM2A/laforin and HSP70. Interacts with PRDM8.

It localises to the endoplasmic reticulum. Its subcellular location is the nucleus. It carries out the reaction S-ubiquitinyl-[E2 ubiquitin-conjugating enzyme]-L-cysteine + [acceptor protein]-L-lysine = [E2 ubiquitin-conjugating enzyme]-L-cysteine + N(6)-ubiquitinyl-[acceptor protein]-L-lysine.. The protein operates within protein modification; protein ubiquitination. Its function is as follows. E3 ubiquitin-protein ligase. Together with the phosphatase EPM2A/laforin, appears to be involved in the clearance of toxic polyglucosan and protein aggregates via multiple pathways. In complex with EPM2A/laforin and HSP70, suppresses the cellular toxicity of misfolded proteins by promoting their degradation through the ubiquitin-proteasome system (UPS). Ubiquitinates the glycogen-targeting protein phosphatase subunits PPP1R3C/PTG and PPP1R3D in a laforin-dependent manner and targets them for proteasome-dependent degradation, thus decreasing glycogen accumulation. Polyubiquitinates EPM2A/laforin and ubiquitinates AGL and targets them for proteasome-dependent degradation. Also promotes proteasome-independent protein degradation through the macroautophagy pathway. The protein is E3 ubiquitin-protein ligase NHLRC1 (Nhlrc1) of Mus musculus (Mouse).